Here is a 456-residue protein sequence, read N- to C-terminus: Nuclear distribution protein PAC1 (456 aa).

In terms of domain architecture, LisH spans 9-41; that stretch reads QADELHKSIIAYLSANDLPNTAAALRAELNLTE. A coiled-coil region spans residues 61–88; that stretch reads TSIVRLQKKIMDLEARNAALQSELDNLT. WD repeat units lie at residues 114-153, 156-197, 201-240, 243-282, 288-348, 350-389, 394-437, and 439-456; these read SHRD…LEMT, GHTR…KNVR, GHDH…CVRS, GHTG…NPEN, GHEH…LMTL, GHDN…KCVK, AHDR…PDVQ, and RCVI…IFAA.

This sequence belongs to the WD repeat LIS1/nudF family. As to quaternary structure, self-associates. Interacts with NDL1 and dynein.

Its subcellular location is the cytoplasm. The protein resides in the cytoskeleton. It localises to the spindle pole. In terms of biological role, positively regulates the activity of the minus-end directed microtubule motor protein dynein. May enhance dynein-mediated microtubule sliding by targeting dynein to the microtubule plus end. Required for nuclear migration during vegetative growth as well as development. Required for retrograde early endosome (EE) transport from the hyphal tip. Required for localization of dynein to the mitotic spindle poles. Recruits additional proteins to the dynein complex at SPBs. The chain is Nuclear distribution protein PAC1 from Ajellomyces capsulatus (strain H143) (Darling's disease fungus).